A 358-amino-acid polypeptide reads, in one-letter code: UDP-N-acetylglucosamine--N-acetylmuramyl-(pentapeptide) pyrophosphoryl-undecaprenol N-acetylglucosamine transferase (358 aa).

UDP-N-acetyl-alpha-D-glucosamine is bound by residues 11–13 (TGG), Asn-120, Arg-161, Ser-188, and Gln-282.

It belongs to the glycosyltransferase 28 family. MurG subfamily.

The protein localises to the cell inner membrane. The enzyme catalyses di-trans,octa-cis-undecaprenyl diphospho-N-acetyl-alpha-D-muramoyl-L-alanyl-D-glutamyl-meso-2,6-diaminopimeloyl-D-alanyl-D-alanine + UDP-N-acetyl-alpha-D-glucosamine = di-trans,octa-cis-undecaprenyl diphospho-[N-acetyl-alpha-D-glucosaminyl-(1-&gt;4)]-N-acetyl-alpha-D-muramoyl-L-alanyl-D-glutamyl-meso-2,6-diaminopimeloyl-D-alanyl-D-alanine + UDP + H(+). It functions in the pathway cell wall biogenesis; peptidoglycan biosynthesis. Cell wall formation. Catalyzes the transfer of a GlcNAc subunit on undecaprenyl-pyrophosphoryl-MurNAc-pentapeptide (lipid intermediate I) to form undecaprenyl-pyrophosphoryl-MurNAc-(pentapeptide)GlcNAc (lipid intermediate II). The sequence is that of UDP-N-acetylglucosamine--N-acetylmuramyl-(pentapeptide) pyrophosphoryl-undecaprenol N-acetylglucosamine transferase from Parasynechococcus marenigrum (strain WH8102).